The sequence spans 126 residues: Fatty acid-binding protein, liver (126 aa).

Cholate contacts are provided by residues Thr54–Asn56, His99–Gln101, and Arg121.

Belongs to the calycin superfamily. Fatty-acid binding protein (FABP) family.

Its subcellular location is the cytoplasm. FABPs are thought to play a role in the intracellular transport of long-chain fatty acids and their acyl-CoA esters. This Anolis pulchellus (Common grass anole) protein is Fatty acid-binding protein, liver.